Consider the following 80-residue polypeptide: Cytochrome c oxidase subunit 7A1, mitochondrial (80 aa).

The transit peptide at 1-21 (MRALRVSQALVRSFSSTARNR) directs the protein to the mitochondrion. Topologically, residues 22–46 (LENRVAEKQKIFQADNDLPVHLKGG) are mitochondrial matrix. Residues 47 to 75 (ATDNILYRVTMTLCLGGTVYSLYCLGWAS) traverse the membrane as a helical segment. The Mitochondrial intermembrane segment spans residues 76–80 (FPHKK).

This sequence belongs to the cytochrome c oxidase VIIa family. Component of the complex IV (CIV, cytochrome c oxidase), a multisubunit enzyme composed of 14 subunits. The complex is composed of a catalytic core of 3 subunits MT-CO1, MT-CO2 and MT-CO3, encoded in the mitochondrial DNA, and 11 supernumerary subunits COX4I1 (or COX4I2), COX5A, COX5B, COX6A2 (or COX6A1), COX6B1 (or COX6B2), COX6C, COX7A1 (or COX7A2), COX7B, COX7C, COX8B and NDUFA4, which are encoded in the nuclear genome. The complex exists as a monomer or a dimer and forms supercomplexes (SCs) in the inner mitochondrial membrane with NADH-ubiquinone oxidoreductase (complex I, CI) and ubiquinol-cytochrome c oxidoreductase (cytochrome b-c1 complex, complex III, CIII), resulting in different assemblies (supercomplex SCI(1)III(2)IV(1) and megacomplex MCI(2)III(2)IV(2)).

It localises to the mitochondrion inner membrane. Its pathway is energy metabolism; oxidative phosphorylation. In terms of biological role, component of the mitochondrial respiratory complex IV (CIV, also named cytochrome c oxidase complex), the last enzyme in the mitochondrial electron transport chain which drives oxidative phosphorylation. The CIV complex is the component of the respiratory chain that catalyzes the reduction of oxygen to water. Acts as an assembly factor that specifically drives the homodimerization of CIV complexes, mediating the formation of mitochondrial respiratory supercomplexes (respirasomes) containing two CIV: supercomplxes with two molecules of CIV show improved activity. Despite being highly expressed in brown adipose tissue, not required for thermogenesis. This Sus scrofa (Pig) protein is Cytochrome c oxidase subunit 7A1, mitochondrial (COX7A1).